Here is a 123-residue protein sequence, read N- to C-terminus: WAP four-disulfide core domain protein 5 (123 aa).

An N-terminal signal peptide occupies residues 1 to 24 (MRIQSLLLLGVLLAVGSQLPAAFG). WAP domains follow at residues 27-73 (KGEK…CVPR) and 74-121 (ISVK…RDPA). Cystine bridges form between C34–C62, C41–C66, C49–C61, C55–C70, C81–C109, C88–C113, C96–C108, and C102–C117.

The protein resides in the secreted. In terms of biological role, putative acid-stable proteinase inhibitor. This is WAP four-disulfide core domain protein 5 (WFDC5) from Callithrix jacchus (White-tufted-ear marmoset).